Consider the following 216-residue polypeptide: Ribosomal RNA large subunit methyltransferase E (216 aa).

Residues Gly-60, Trp-62, Asp-80, Asp-96, and Asp-121 each coordinate S-adenosyl-L-methionine. Lys-161 acts as the Proton acceptor in catalysis.

It belongs to the class I-like SAM-binding methyltransferase superfamily. RNA methyltransferase RlmE family.

It localises to the cytoplasm. It catalyses the reaction uridine(2552) in 23S rRNA + S-adenosyl-L-methionine = 2'-O-methyluridine(2552) in 23S rRNA + S-adenosyl-L-homocysteine + H(+). Its function is as follows. Specifically methylates the uridine in position 2552 of 23S rRNA at the 2'-O position of the ribose in the fully assembled 50S ribosomal subunit. This chain is Ribosomal RNA large subunit methyltransferase E, found in Pseudomonas savastanoi pv. phaseolicola (strain 1448A / Race 6) (Pseudomonas syringae pv. phaseolicola (strain 1448A / Race 6)).